Consider the following 359-residue polypeptide: Bergaptol O-methyltransferase (359 aa).

Residue histidine 126 participates in bergaptol binding. The S-adenosyl-L-homocysteine site is built by serine 179, glycine 203, aspartate 226, aspartate 246, and lysine 260. Histidine 264 contacts bergaptol. The active-site Proton acceptor is the histidine 264.

Belongs to the class I-like SAM-binding methyltransferase superfamily. Cation-independent O-methyltransferase family. COMT subfamily.

It carries out the reaction a 5-hydroxyfurocoumarin + S-adenosyl-L-methionine = a 5-methoxyfurocoumarin + S-adenosyl-L-homocysteine + H(+). It catalyses the reaction bergaptol + S-adenosyl-L-methionine = bergapten + S-adenosyl-L-homocysteine. With respect to regulation, inhibited by Cu(2+), Ni(2+) and Co(2+). The sequence is that of Bergaptol O-methyltransferase from Glehnia littoralis (Beach silvertop).